A 295-amino-acid chain; its full sequence is Nucleotide-binding protein llmg_1557 (295 aa).

Position 12 to 19 (12 to 19 (GMSGAGKT)) interacts with ATP. 63–66 (DMRS) provides a ligand contact to GTP.

Belongs to the RapZ-like family.

Functionally, displays ATPase and GTPase activities. This Lactococcus lactis subsp. cremoris (strain MG1363) protein is Nucleotide-binding protein llmg_1557.